The primary structure comprises 123 residues: Large ribosomal subunit protein bL20 (123 aa).

The protein belongs to the bacterial ribosomal protein bL20 family.

Binds directly to 23S ribosomal RNA and is necessary for the in vitro assembly process of the 50S ribosomal subunit. It is not involved in the protein synthesizing functions of that subunit. The polypeptide is Large ribosomal subunit protein bL20 (Pseudothermotoga lettingae (strain ATCC BAA-301 / DSM 14385 / NBRC 107922 / TMO) (Thermotoga lettingae)).